The primary structure comprises 116 residues: MAGRSGDSDEELIKTVRIIKHLYQSNPPPKPEGTRQARRNRRRRWRERQRRIHSISAWLLSTCLGRSAEPVPLQLPPLERLTLDCSEDCGTSGTQGVGSPQILVESPAVLESGTKE.

Phosphoserine; by host CK2 is present on residues serine 5 and serine 8. Positions 18–26 are homomultimerization; that stretch reads IIKHLYQSN. A disordered region spans residues 20-48; the sequence is KHLYQSNPPPKPEGTRQARRNRRRRWRER. The Nuclear localization signal and RNA-binding (RRE) signature appears at 34 to 50; the sequence is TRQARRNRRRRWRERQR. Residues 36–48 show a composition bias toward basic residues; the sequence is QARRNRRRRWRER. A Nuclear export signal and binding to XPO1 motif is present at residues 73-84; it reads LQLPPLERLTLD. The interval 91–116 is disordered; sequence TSGTQGVGSPQILVESPAVLESGTKE. A phosphoserine; by host mark is found at serine 92 and serine 99.

It belongs to the HIV-1 REV protein family. As to quaternary structure, homomultimer; when bound to the RRE. Multimeric assembly is essential for activity and may involve XPO1. Binds to human KPNB1, XPO1, TNPO1, RANBP5 and IPO7. Interacts with the viral Integrase. Interacts with human KHDRBS1. Interacts with human NAP1; this interaction decreases Rev multimerization and stimulates its activity. Interacts with human DEAD-box helicases DDX3 and DDX24; these interactions may serve for viral RNA export to the cytoplasm and packaging, respectively. Interacts with human PSIP1; this interaction may inhibit HIV-1 DNA integration by promoting dissociation of the Integrase-LEDGF/p75 complex. Post-translationally, asymmetrically arginine dimethylated at one site by host PRMT6. Methylation impairs the RNA-binding activity and export of viral RNA from the nucleus to the cytoplasm. Phosphorylated by protein kinase CK2. Presence of, and maybe binding to the N-terminus of the regulatory beta subunit of CK2 is necessary for CK2-mediated Rev's phosphorylation.

The protein localises to the host nucleus. It localises to the host nucleolus. The protein resides in the host cytoplasm. In terms of biological role, escorts unspliced or incompletely spliced viral pre-mRNAs (late transcripts) out of the nucleus of infected cells. These pre-mRNAs carry a recognition sequence called Rev responsive element (RRE) located in the env gene, that is not present in fully spliced viral mRNAs (early transcripts). This function is essential since most viral proteins are translated from unspliced or partially spliced pre-mRNAs which cannot exit the nucleus by the pathway used by fully processed cellular mRNAs. Rev itself is translated from a fully spliced mRNA that readily exits the nucleus. Rev's nuclear localization signal (NLS) binds directly to KPNB1/Importin beta-1 without previous binding to KPNA1/Importin alpha-1. KPNB1 binds to the GDP bound form of RAN (Ran-GDP) and targets Rev to the nucleus. In the nucleus, the conversion from Ran-GDP to Ran-GTP dissociates Rev from KPNB1 and allows Rev's binding to the RRE in viral pre-mRNAs. Rev multimerization on the RRE via cooperative assembly exposes its nuclear export signal (NES) to the surface. Rev can then form a complex with XPO1/CRM1 and Ran-GTP, leading to nuclear export of the complex. Conversion from Ran-GTP to Ran-GDP mediates dissociation of the Rev/RRE/XPO1/RAN complex, so that Rev can return to the nucleus for a subsequent round of export. Beside KPNB1, also seems to interact with TNPO1/Transportin-1, RANBP5/IPO5 and IPO7/RANBP7 for nuclear import. The nucleoporin-like HRB/RIP is an essential cofactor that probably indirectly interacts with Rev to release HIV RNAs from the perinuclear region to the cytoplasm. The sequence is that of Protein Rev from Human immunodeficiency virus type 1 group M subtype B (isolate CDC-451) (HIV-1).